Here is a 142-residue protein sequence, read N- to C-terminus: ATP synthase F(0) complex subunit C3, mitochondrial (142 aa).

The transit peptide at 1–67 (MFACAKLACT…REFQTSAISR (67 aa)) directs the protein to the mitochondrion. A helical membrane pass occupies residues 83–103 (VGVAGSGAGIGTVFGSLIIGY). The residue at position 110 (Lys-110) is an N6,N6,N6-trimethyllysine. Residues 118-138 (ILGFALSEAMGLFCLMVAFLI) form a helical membrane-spanning segment.

This sequence belongs to the ATPase C chain family. As to quaternary structure, F-type ATPases have 2 components, CF(1) - the catalytic core - and CF(0) - the membrane proton channel. CF(1) has five subunits: alpha(3), beta(3), gamma(1), delta(1), epsilon(1). CF(0) has three main subunits: a, b and c. Interacts with TMEM70 and TMEM242. Post-translationally, trimethylated by ATPSCKMT at Lys-110. Methylation is required for proper incorporation of the C subunit into the ATP synthase complex and mitochondrial respiration.

Its subcellular location is the mitochondrion membrane. Its function is as follows. Mitochondrial membrane ATP synthase (F(1)F(0) ATP synthase or Complex V) produces ATP from ADP in the presence of a proton gradient across the membrane which is generated by electron transport complexes of the respiratory chain. F-type ATPases consist of two structural domains, F(1) - containing the extramembraneous catalytic core and F(0) - containing the membrane proton channel, linked together by a central stalk and a peripheral stalk. During catalysis, ATP synthesis in the catalytic domain of F(1) is coupled via a rotary mechanism of the central stalk subunits to proton translocation. Part of the complex F(0) domain. A homomeric c-ring of probably 10 subunits is part of the complex rotary element. In Pongo abelii (Sumatran orangutan), this protein is ATP synthase F(0) complex subunit C3, mitochondrial.